A 337-amino-acid chain; its full sequence is Arylacetonitrilase (337 aa).

Residues 7-278 (VRVAVTQHEP…EGFVYADLDL (272 aa)) enclose the CN hydrolase domain. Residue Glu-47 is the Proton acceptor of the active site. Lys-127 is an active-site residue. Cys-162 serves as the catalytic Nucleophile. The tract at residues 311–337 (QHRPEGQADNAAYGLDVPSGLVEEEGA) is disordered.

Belongs to the carbon-nitrogen hydrolase superfamily. Nitrilase family.

The enzyme catalyses a nitrile + 2 H2O = a carboxylate + NH4(+). The catalysed reaction is 4-chlorophenylacetonitrile + 2 H2O = 4-chlorophenylacetate + NH4(+). In terms of biological role, nitrilase that hydrolyzes preferentially phenylacetonitrile, but also (R,S)-mandelonitrile, and 2-phenylpropionitrile. This is Arylacetonitrilase from Aspergillus niger (strain ATCC MYA-4892 / CBS 513.88 / FGSC A1513).